The chain runs to 336 residues: MAKKIRIIDSTLRDGMHAVSHQFTPEEMAEIAAGLDAAGIDTIEVSHGDGLGGSSYNYGFAAAKDEDYLKAVSQVLKNSKLGVLLLPGIGTAHDLEMAAKFGAKVVRVATHCTEADIGEQHIKIAKELGMEAIGFLMMSHMVPPEKLVEQAKLFESYGADAVYITDSAGAMTPYDVKVRIEAVKAAVSVPVGFHAHNNLGLAIGNTLAAIEAGATYVDGTARGLGAGAGNSQTEILVAVLAKLGYETGVDLYKIMDVAEEVVAPKMRRPQIVDKAALSLGYAGVYGSFLLHAMRAAEKFKVDVRDILIELGRLKTVGGQEDMIVDVAYELSKANKQ.

In terms of domain architecture, Pyruvate carboxyltransferase spans 5–255 (IRIIDSTLRD…ETGVDLYKIM (251 aa)). 13–14 (RD) contacts substrate. Asp-14 lines the Mn(2+) pocket. His-17 (proton acceptor) is an active-site residue. Ser-167 and His-194 together coordinate substrate. Mn(2+)-binding residues include His-194 and His-196. Tyr-285 is a substrate binding site.

It belongs to the 4-hydroxy-2-oxovalerate aldolase family.

The catalysed reaction is (S)-4-hydroxy-2-oxopentanoate = acetaldehyde + pyruvate. This Carboxydothermus hydrogenoformans (strain ATCC BAA-161 / DSM 6008 / Z-2901) protein is 4-hydroxy-2-oxovalerate aldolase (mhpE).